The chain runs to 148 residues: Transcriptional regulator MraZ (148 aa).

2 consecutive SpoVT-AbrB domains span residues 5-51 (STQL…PQPV) and 80-123 (ASDV…DMAK).

It belongs to the MraZ family. Forms oligomers.

Its subcellular location is the cytoplasm. It is found in the nucleoid. In Nitrosomonas europaea (strain ATCC 19718 / CIP 103999 / KCTC 2705 / NBRC 14298), this protein is Transcriptional regulator MraZ.